The chain runs to 459 residues: Probable acetate kinase (459 aa).

Position 9 (Asn-9) interacts with Mg(2+). Lys-16 is an ATP binding site. Arg-100 contacts substrate. Asp-156 (proton donor/acceptor) is an active-site residue. ATP-binding positions include 216–220 (HLGSG) and 299–301 (DFR). The interval 308–338 (TTTSSPTPSPNPNPNPNPDPNPDPNPDPQNQ) is disordered. Pro residues predominate over residues 314 to 334 (TPSPNPNPNPNPDPNPDPNPD). Glu-441 lines the Mg(2+) pocket.

Belongs to the acetokinase family. Mg(2+) serves as cofactor.

It carries out the reaction acetate + ATP = acetyl phosphate + ADP. The protein operates within metabolic intermediate biosynthesis; acetyl-CoA biosynthesis; acetyl-CoA from acetate: step 1/2. The polypeptide is Probable acetate kinase (Chaetomium globosum (strain ATCC 6205 / CBS 148.51 / DSM 1962 / NBRC 6347 / NRRL 1970) (Soil fungus)).